Reading from the N-terminus, the 117-residue chain is NADH-ubiquinone oxidoreductase chain 3 (117 aa).

Helical transmembrane passes span 5 to 25 (ALSS…AWVL), 57 to 77 (FFLL…LMPL), and 86 to 106 (VFTT…GLIH).

The protein belongs to the complex I subunit 3 family.

Its subcellular location is the mitochondrion membrane. The enzyme catalyses a ubiquinone + NADH + 5 H(+)(in) = a ubiquinol + NAD(+) + 4 H(+)(out). Core subunit of the mitochondrial membrane respiratory chain NADH dehydrogenase (Complex I) that is believed to belong to the minimal assembly required for catalysis. Complex I functions in the transfer of electrons from NADH to the respiratory chain. The immediate electron acceptor for the enzyme is believed to be ubiquinone. The protein is NADH-ubiquinone oxidoreductase chain 3 (ND3) of Lumbricus terrestris (Common earthworm).